Consider the following 387-residue polypeptide: Putative ankyrin repeat protein RBE_0984 (387 aa).

5 ANK repeats span residues 50–79 (YGNT…DKDI), 88–119 (HRET…AINV), 123–154 (RKHT…VINV), 159–188 (HKDS…KENI), and 210–239 (VCKM…LKGE). 2 coiled-coil regions span residues 251–278 (FEDI…KKCE) and 311–352 (SISA…ALEK).

This Rickettsia bellii (strain RML369-C) protein is Putative ankyrin repeat protein RBE_0984.